We begin with the raw amino-acid sequence, 167 residues long: Epithelial membrane protein 2 (167 aa).

Residues 1–21 (MLVLLAFIIAFHITSAALLFI) traverse the membrane as a helical segment. Asparagine 44, asparagine 47, and asparagine 52 each carry an N-linked (GlcNAc...) asparagine glycan. 3 helical membrane-spanning segments follow: residues 67–87 (TMIL…LQLF), 95–115 (FVLT…AASI), and 143–163 (YILA…YLIL).

It belongs to the PMP-22/EMP/MP20 family. In terms of assembly, interacts with PTK2; regulates PTK2 activation and localization. Interacts with ITGB3; regulates the levels of the heterodimer ITGA5-ITGB3 integrin surface expression. Interacts with P2RX7 (via C-terminus). Interacts with ITGB1; the interaction may be direct or indirect and ITGB1 has a heterodimer form.

The protein resides in the golgi apparatus membrane. It is found in the cell membrane. Its subcellular location is the apical cell membrane. It localises to the membrane raft. The protein localises to the cytoplasm. The protein resides in the nucleus. It is found in the perinuclear region. Its function is as follows. Functions as a key regulator of cell membrane composition by regulating protein surface expression. Also, plays a role in regulation of processes including cell migration, cell proliferation, cell contraction and cell adhesion. Regulates transepithelial migration of neutrophils into the alveolar lumen, potentially via mediation of cell surface expression of adhesion markers and lipid raft formation. Negatively regulates caveolae formation by reducing CAV1 expression and CAV1 amount by increasing lysosomal degradation. Facilitates surface trafficking and the formation of lipid rafts bearing GPI-anchor proteins. Regulates surface expression of MHC1 and ICAM1 proteins increasing susceptibility to T-cell mediated cytotoxicity. Regulates the plasma membrane expression of the integrin heterodimers ITGA6-ITGB1, ITGA5-ITGB3 and ITGA5-ITGB1 resulting in modulation of cell-matrix adhesion. Also regulates many processes through PTK2. Regulates blood vessel endothelial cell migration and angiogenesis by regulating VEGF protein expression through PTK2 activation. Regulates cell migration and cell contraction through PTK2 and SRC activation. Regulates focal adhesion density, F-actin conformation and cell adhesion capacity through interaction with PTK2. Positively regulates cell proliferation. Plays a role during cell death and cell blebbing. Promotes angiogenesis and vasculogenesis through induction of VEGFA via a HIF1A-dependent pathway. Also plays a role in embryo implantation by regulating surface trafficking of integrin heterodimer ITGA5-ITGB3. Plays a role in placental angiogenesis and uterine natural killer cell regulation at the maternal-fetal placental interface, however not required in the maternal tissues for a viable pregnancy. Involved in the early stages of embryogenic development and cardiogenesis, potentially via regulation of epithelial-mesenchymal transition timing. May play a role in glomerular filtration. The chain is Epithelial membrane protein 2 (EMP2) from Pan troglodytes (Chimpanzee).